We begin with the raw amino-acid sequence, 412 residues long: L-threonine:uridine-5'-aldehyde transaldolase (412 aa).

An N6-(pyridoxal phosphate)lysine modification is found at lysine 229.

This sequence belongs to the SHMT family. Pyridoxal 5'-phosphate serves as cofactor.

The enzyme catalyses uridine-5'-aldehyde + L-threonine = (5'S,6'S)-C-glycyluridine + acetaldehyde. It participates in antibiotic biosynthesis. Its function is as follows. Transaldolase involved in the biosynthesis of the capuramycin-type nucleoside antibiotic A-503083. Catalyzes the condensation of L-threonine and uridine-5'-aldehyde to form 5'-C-glycyluridine (GlyU). Forms (5'S,6'S)-GlyU. This chain is L-threonine:uridine-5'-aldehyde transaldolase, found in Streptomyces sp.